A 313-amino-acid chain; its full sequence is Arabinooligosaccharides transport system permease protein AraP (313 aa).

6 helical membrane passes run 39 to 59 (FVLSFLVFFLYPIISVFIMSF), 91 to 111 (LEYTFWTLIVLIPVPLLLAIF), 126 to 146 (ALFIPALTSTIVAGIIFRLIF), 176 to 196 (MFLMVLLASWRWMGINILYFL), 224 to 244 (ITLPFLKPVTVYVLTISIIGG), and 281 to 301 (MGYGAAIGIVLLIVILVVSLI). In terms of domain architecture, ABC transmembrane type-1 spans 87–302 (LWNTLEYTFW…IVILVVSLIS (216 aa)).

Belongs to the binding-protein-dependent transport system permease family. MalFG subfamily. As to quaternary structure, the complex is composed of two ATP-binding proteins (MsmX), two transmembrane proteins (AraP and AraQ) and a solute-binding protein (AraN).

The protein localises to the cell membrane. Its function is as follows. Part of the ABC transporter complex AraNPQ involved in the uptake of arabinooligosaccharides. Transports alpha-1,5-arabinooligosaccharides, at least up to four L-arabinosyl units. Responsible for the translocation of the substrate across the membrane. The polypeptide is Arabinooligosaccharides transport system permease protein AraP (Bacillus subtilis (strain 168)).